Here is a 40-residue protein sequence, read N- to C-terminus: Small polypeptide DEVIL 3 (40 aa).

Positions 9-40 (PCNKKLGGYLKEQKGRLYIIRRCVVMLICWHD) are required for DVL/RTFL small polypeptide activity. A helical transmembrane segment spans residues 12 to 28 (KKLGGYLKEQKGRLYII).

This sequence belongs to the DVL/RTFL small polypeptides family. In terms of tissue distribution, mostly expressed in flowers and stems, and, to a lower extent, in roots and leaves.

The protein localises to the cell membrane. Small polypeptide acting as a regulatory molecule which coordinates cellular responses required for differentiation, growth and development, including leaves shape, pedicule elongation, inflorescence organization and fruit maturation, probably by restricting polar cell proliferation in lateral organs and coordinating socket cell recruitment and differentiation at trichome sites. The polypeptide is Small polypeptide DEVIL 3 (Arabidopsis thaliana (Mouse-ear cress)).